The sequence spans 293 residues: Aromatic amino acid exporter YddG (293 aa).

The Cytoplasmic segment spans residues 1 to 6 (MTRQKA). The EamA 1 domain maps to 6–137 (ATLIGLIAIV…LALVGVCWVL (132 aa)). A helical membrane pass occupies residues 7-27 (TLIGLIAIVLWSTMVGLIRGV). Residues 28-33 (SEGLGP) lie on the Periplasmic side of the membrane. The chain crosses the membrane as a helical span at residues 34 to 54 (VGGAAAIYSLSGLLLIFTVGF). The Cytoplasmic segment spans residues 55-62 (PRIRQIPK). A helical transmembrane segment spans residues 63-83 (GYLLAGSLLFVSYEICLALSL). Residues 84 to 92 (GYAATHHQA) lie on the Periplasmic side of the membrane. A helical transmembrane segment spans residues 93 to 113 (IEVGMVNYLWPSLTILFAILF). Residues 114 to 118 (NGQKT) are Cytoplasmic-facing. Residues 119–139 (NWLIVPGLLLALVGVCWVLGG) form a helical membrane-spanning segment. Residues 140-155 (DNGLHYDEIINNITTS) lie on the Periplasmic side of the membrane. Residues 156–176 (PLSYFLAFIGAFIWAAYCTVT) form a helical membrane-spanning segment. The EamA 2 domain maps to 158-285 (SYFLAFIGAF…ALMVCGGSLL (128 aa)). Residues 177–182 (NKYARG) are Cytoplasmic-facing. Residues 183–203 (FNGITVFVLLTGASLWVYYFL) form a helical membrane-spanning segment. At 204–218 (TPQPEMIFSTPVMIK) the chain is on the periplasmic side. The chain crosses the membrane as a helical span at residues 219-239 (LISAAFTLGFAYAAWNVGILH). Over 240–243 (GNVT) the chain is Cytoplasmic. A helical transmembrane segment spans residues 244–264 (IMAVGSYFTPVLSSALAAVLL). The Periplasmic portion of the chain corresponds to 265–267 (SAP). The helical transmembrane segment at 268–288 (LSFSFWQGALMVCGGSLLCWL) threads the bilayer. Over 289-293 (ATRRG) the chain is Cytoplasmic.

It belongs to the drug/metabolite transporter (DMT) superfamily. Aromatic amino acid/paraquat exporter (ArAA/P-E) (TC 2.A.7.17) family.

It is found in the cell inner membrane. It catalyses the reaction L-phenylalanine(in) = L-phenylalanine(out). The enzyme catalyses L-tyrosine(in) = L-tyrosine(out). The catalysed reaction is L-tryptophan(in) = L-tryptophan(out). It carries out the reaction L-threonine(in) = L-threonine(out). It catalyses the reaction L-methionine(in) = L-methionine(out). The enzyme catalyses L-lysine(in) = L-lysine(out). The catalysed reaction is L-glutamate(out) = L-glutamate(in). It carries out the reaction L-valine(in) = L-valine(out). It catalyses the reaction L-isoleucine(in) = L-isoleucine(out). Its function is as follows. Amino acid transporter with broad substrate specificity. Can transport various amino acids, including phenylalanine, tyrosine, tryptophan, L-threonine, L-methionine, L-lysine, L-glutamate, L-valine and L-isoleucine. Overexpression confers resistance to phenylalanine and increases export of phenylalanine, tyrosine and tryptophan. This chain is Aromatic amino acid exporter YddG (yddG), found in Escherichia coli (strain K12).